Consider the following 212-residue polypeptide: Pyrrolidone-carboxylate peptidase (212 aa).

Active-site residues include Glu-78, Cys-141, and His-165.

This sequence belongs to the peptidase C15 family. As to quaternary structure, homotetramer.

The protein localises to the cytoplasm. The catalysed reaction is Release of an N-terminal pyroglutamyl group from a polypeptide, the second amino acid generally not being Pro.. Removes 5-oxoproline from various penultimate amino acid residues except L-proline. This chain is Pyrrolidone-carboxylate peptidase, found in Staphylococcus aureus (strain Mu3 / ATCC 700698).